Reading from the N-terminus, the 228-residue chain is 2,3-bisphosphoglycerate-dependent phosphoglycerate mutase (228 aa).

Residues 8–15 (RHGQSEWN), 21–22 (TG), Arg60, 87–90 (ERHY), Lys98, 114–115 (RR), and 180–181 (GN) each bind substrate. The Tele-phosphohistidine intermediate role is filled by His9. Glu87 acts as the Proton donor/acceptor in catalysis.

This sequence belongs to the phosphoglycerate mutase family. BPG-dependent PGAM subfamily. In terms of assembly, homodimer.

The enzyme catalyses (2R)-2-phosphoglycerate = (2R)-3-phosphoglycerate. The protein operates within carbohydrate degradation; glycolysis; pyruvate from D-glyceraldehyde 3-phosphate: step 3/5. Functionally, catalyzes the interconversion of 2-phosphoglycerate and 3-phosphoglycerate. This is 2,3-bisphosphoglycerate-dependent phosphoglycerate mutase from Zymomonas mobilis subsp. mobilis (strain ATCC 31821 / ZM4 / CP4).